The chain runs to 129 residues: Biogenesis of lysosome-related organelles complex 1 subunit CNL1 (129 aa).

Belongs to the BLOC1S4 family. In terms of assembly, component of the biogenesis of lysosome-related organelles complex-1 (BLOC-1).

The protein localises to the cytoplasm. Functionally, component of the biogenesis of lysosome-related organelles complex-1 (BLOC-1), a complex that is involved in endosomal cargo sorting. In Eremothecium gossypii (strain ATCC 10895 / CBS 109.51 / FGSC 9923 / NRRL Y-1056) (Yeast), this protein is Biogenesis of lysosome-related organelles complex 1 subunit CNL1 (CLN1).